A 462-amino-acid chain; its full sequence is ATP synthase subunit beta (462 aa).

152-159 (GGAGVGKT) contributes to the ATP binding site.

It belongs to the ATPase alpha/beta chains family. F-type ATPases have 2 components, CF(1) - the catalytic core - and CF(0) - the membrane proton channel. CF(1) has five subunits: alpha(3), beta(3), gamma(1), delta(1), epsilon(1). CF(0) has three main subunits: a(1), b(2) and c(9-12). The alpha and beta chains form an alternating ring which encloses part of the gamma chain. CF(1) is attached to CF(0) by a central stalk formed by the gamma and epsilon chains, while a peripheral stalk is formed by the delta and b chains.

It is found in the cell inner membrane. The catalysed reaction is ATP + H2O + 4 H(+)(in) = ADP + phosphate + 5 H(+)(out). In terms of biological role, produces ATP from ADP in the presence of a proton gradient across the membrane. The catalytic sites are hosted primarily by the beta subunits. The protein is ATP synthase subunit beta of Aeromonas hydrophila subsp. hydrophila (strain ATCC 7966 / DSM 30187 / BCRC 13018 / CCUG 14551 / JCM 1027 / KCTC 2358 / NCIMB 9240 / NCTC 8049).